The following is a 252-amino-acid chain: Phosphate import ATP-binding protein PstB (252 aa).

Residues 6–247 form the ABC transporter domain; that stretch reads ITIEKLNLYY…PKDERTEKYI (242 aa). Residue 38–45 coordinates ATP; the sequence is GPSGCGKS.

It belongs to the ABC transporter superfamily. Phosphate importer (TC 3.A.1.7) family. The complex is composed of two ATP-binding proteins (PstB), two transmembrane proteins (PstC and PstA) and a solute-binding protein (PstS).

The protein resides in the cell membrane. The catalysed reaction is phosphate(out) + ATP + H2O = ADP + 2 phosphate(in) + H(+). Its function is as follows. Part of the ABC transporter complex PstSACB involved in phosphate import. Responsible for energy coupling to the transport system. The protein is Phosphate import ATP-binding protein PstB of Lactobacillus delbrueckii subsp. bulgaricus (strain ATCC 11842 / DSM 20081 / BCRC 10696 / JCM 1002 / NBRC 13953 / NCIMB 11778 / NCTC 12712 / WDCM 00102 / Lb 14).